Consider the following 159-residue polypeptide: ATP synthase subunit b (159 aa).

The chain crosses the membrane as a helical span at residues 2–22 (NISIPQIIAAILNFIILLLIV).

It belongs to the ATPase B chain family. In terms of assembly, F-type ATPases have 2 components, F(1) - the catalytic core - and F(0) - the membrane proton channel. F(1) has five subunits: alpha(3), beta(3), gamma(1), delta(1), epsilon(1). F(0) has three main subunits: a(1), b(2) and c(10-14). The alpha and beta chains form an alternating ring which encloses part of the gamma chain. F(1) is attached to F(0) by a central stalk formed by the gamma and epsilon chains, while a peripheral stalk is formed by the delta and b chains.

The protein resides in the cell membrane. Functionally, f(1)F(0) ATP synthase produces ATP from ADP in the presence of a proton or sodium gradient. F-type ATPases consist of two structural domains, F(1) containing the extramembraneous catalytic core and F(0) containing the membrane proton channel, linked together by a central stalk and a peripheral stalk. During catalysis, ATP synthesis in the catalytic domain of F(1) is coupled via a rotary mechanism of the central stalk subunits to proton translocation. Its function is as follows. Component of the F(0) channel, it forms part of the peripheral stalk, linking F(1) to F(0). The sequence is that of ATP synthase subunit b from Clostridium botulinum (strain ATCC 19397 / Type A).